A 207-amino-acid chain; its full sequence is Ras-related protein Rab-7a (207 aa).

Threonine 2 is modified (N-acetylthreonine). Residues serine 17, glycine 18, valine 19, glycine 20, lysine 21, threonine 22, serine 23, serine 34, asparagine 35, tyrosine 37, and threonine 40 each contribute to the GTP site. Threonine 22 provides a ligand contact to Mg(2+). The Switch 1 motif lies at 28-41; it reads YVNKKFSNQYKATI. Mg(2+) contacts are provided by threonine 40 and aspartate 63. Glycine 66 lines the GTP pocket. Positions 67 to 82 match the Switch 2 motif; it reads QERFQSLSVAFYRGAD. Serine 72 carries the post-translational modification Phosphoserine. GTP is bound by residues asparagine 125, lysine 126, aspartate 128, alanine 156, and lysine 157. Residues lysine 191 and lysine 194 each participate in a glycyl lysine isopeptide (Lys-Gly) (interchain with G-Cter in ubiquitin) cross-link. Residues cysteine 205 and cysteine 207 are each lipidated (S-geranylgeranyl cysteine). Cysteine 207 bears the Cysteine methyl ester mark.

This sequence belongs to the small GTPase superfamily. Rab family. Interacts with NTRK1/TRKA. Interacts with RILP. Interacts with PSMA7. Interacts with RNF115. Interacts with FYCO1. Interacts with the PIK3C3/VPS34-PIK3R4 complex. The GTP-bound form interacts with OSBPL1A. The GTP-bound form interacts with RAC1. Interacts with CLN3. Interacts with CHM, the substrate-binding subunit of the Rab geranylgeranyltransferase complex. Interacts with C9orf72. Does not interact with HPS4 and the BLOC-3 complex (heterodimer of HPS1 and HPS4). Interacts with CLN5. Interacts with PLEKHM1 (via N- and C-terminus). Interacts with PRPH; the interaction is direct. Interacts with VPS13A. The GDP-bound form interacts with RIMOC1. Interacts with the MON1A-CCZ1B complex and this interaction is enhanced in the presence of RIMOC1. Interacts with VPS39 and VPS41. Forms a ternary complex with LAMP2 and RUFY4; the interaction with LAMP2 is mediated by RUFY4 (via RUN and coiled coil domains). It depends on Mg(2+) as a cofactor. In terms of processing, deubiquitination at Lys-191 and Lys-194 by USP32. Phosphorylated at Ser-72 by LRRK1; phosphorylation is dependent on protein kinase C (PKC) activation of LRRK1. Post-translationally, prenylated. Prenylation is required for association with cellular membranes.

It localises to the cytoplasmic vesicle. Its subcellular location is the phagosome membrane. It is found in the late endosome membrane. The protein localises to the lysosome membrane. The protein resides in the melanosome membrane. It localises to the autophagosome membrane. Its subcellular location is the lipid droplet. It is found in the endosome membrane. The protein localises to the mitochondrion membrane. The catalysed reaction is GTP + H2O = GDP + phosphate + H(+). Its activity is regulated as follows. Regulated by guanine nucleotide exchange factors (GEFs) which promote the exchange of bound GDP for free GTP. Regulated by GTPase activating proteins (GAPs) which increase the GTP hydrolysis activity. Inhibited by GDP dissociation inhibitors (GDIs). The small GTPases Rab are key regulators of intracellular membrane trafficking, from the formation of transport vesicles to their fusion with membranes. Rabs cycle between an inactive GDP-bound form and an active GTP-bound form that is able to recruit to membranes different sets of downstream effectors directly responsible for vesicle formation, movement, tethering and fusion. In its active state, RAB7A binds to a variety of effector proteins playing a key role in the regulation of endo-lysosomal trafficking. Governs early-to-late endosomal maturation, microtubule minus-end as well as plus-end directed endosomal migration and positioning, and endosome-lysosome transport through different protein-protein interaction cascades. Also plays a central role in growth-factor-mediated cell signaling, nutrient-transporter-mediated nutrient uptake, neurotrophin transport in the axons of neurons and lipid metabolism. Also involved in regulation of some specialized endosomal membrane trafficking, such as maturation of melanosomes, pathogen-induced phagosomes (or vacuoles) and autophagosomes. Plays a role in the maturation and acidification of phagosomes that engulf pathogens, such as S.aureus and Mycobacteria. Plays a role in the fusion of phagosomes with lysosomes. In concert with RAC1, plays a role in regulating the formation of RBs (ruffled borders) in osteoclasts. Controls the endosomal trafficking and neurite outgrowth signaling of NTRK1/TRKA. Regulates the endocytic trafficking of the EGF-EGFR complex by regulating its lysosomal degradation. Involved in the ADRB2-stimulated lipolysis through lipophagy, a cytosolic lipase-independent autophagic pathway. Required for the exosomal release of SDCBP, CD63 and syndecan. Required for vesicular trafficking and cell surface expression of ACE2. May play a role in PRPH neuronal intermediate filament assembly. The chain is Ras-related protein Rab-7a (RAB7A) from Oryctolagus cuniculus (Rabbit).